Consider the following 121-residue polypeptide: Thioredoxin-like protein (121 aa).

A Thioredoxin domain is found at 2–112 (VHHITSNDEL…LGAAAEKLGG (111 aa)). Cys30 and Cys33 are oxidised to a cystine.

It belongs to the thioredoxin family.

In terms of biological role, participates in various redox reactions through the reversible oxidation of its active center dithiol to a disulfide and catalyzes dithiol-disulfide exchange reactions. This Fusarium culmorum protein is Thioredoxin-like protein.